We begin with the raw amino-acid sequence, 208 residues long: Large ribosomal subunit protein bL25 (208 aa).

It belongs to the bacterial ribosomal protein bL25 family. CTC subfamily. As to quaternary structure, part of the 50S ribosomal subunit; part of the 5S rRNA/L5/L18/L25 subcomplex. Contacts the 5S rRNA. Binds to the 5S rRNA independently of L5 and L18.

This is one of the proteins that binds to the 5S RNA in the ribosome where it forms part of the central protuberance. The chain is Large ribosomal subunit protein bL25 from Syntrophotalea carbinolica (strain DSM 2380 / NBRC 103641 / GraBd1) (Pelobacter carbinolicus).